We begin with the raw amino-acid sequence, 373 residues long: Enoyl-[acyl-carrier-protein] reductase, mitochondrial (373 aa).

A mitochondrion-targeting transit peptide spans 1-53 (MWVCGALCRTRAPAQLGQRLLPESRRRRPASASFSASAEPSRVRALVYGHHGD). K61 carries the post-translational modification N6-acetyllysine; alternate. K61 is subject to N6-succinyllysine; alternate. Y94 acts as the Proton donor in catalysis. NADP(+) is bound by residues N167, 193-196 (NSGV), and 216-218 (RDT). 2 positions are modified to N6-acetyllysine; alternate: K252 and K267. K252 and K267 each carry N6-succinyllysine; alternate. NADP(+)-binding positions include 285 to 288 (YGGM) and 310 to 312 (FWL). K316 is modified (N6-succinyllysine). K368 provides a ligand contact to NADP(+).

This sequence belongs to the zinc-containing alcohol dehydrogenase family. Quinone oxidoreductase subfamily. Homodimer.

The protein resides in the mitochondrion. It carries out the reaction a 2,3-saturated acyl-[ACP] + NADP(+) = a (2E)-enoyl-[ACP] + NADPH + H(+). The catalysed reaction is (2E)-butenoyl-[ACP] + NADPH + H(+) = butanoyl-[ACP] + NADP(+). It catalyses the reaction (2E)-hexenoyl-[ACP] + NADPH + H(+) = hexanoyl-[ACP] + NADP(+). The enzyme catalyses (2E)-octenoyl-[ACP] + NADPH + H(+) = octanoyl-[ACP] + NADP(+). It carries out the reaction (2E)-decenoyl-[ACP] + NADPH + H(+) = decanoyl-[ACP] + NADP(+). The catalysed reaction is (2E)-dodecenoyl-[ACP] + NADPH + H(+) = dodecanoyl-[ACP] + NADP(+). It catalyses the reaction (2E)-tetradecenoyl-[ACP] + NADPH + H(+) = tetradecanoyl-[ACP] + NADP(+). The enzyme catalyses (2E)-hexadecenoyl-[ACP] + NADPH + H(+) = hexadecanoyl-[ACP] + NADP(+). Catalyzes the NADPH-dependent reduction of trans-2-enoyl thioesters in mitochondrial fatty acid synthesis (fatty acid synthesis type II). Fatty acid chain elongation in mitochondria uses acyl carrier protein (ACP) as an acyl group carrier, but the enzyme accepts both ACP and CoA thioesters as substrates in vitro. Displays a preference for medium-chain over short- and long-chain substrates. May provide the octanoyl chain used for lipoic acid biosynthesis, regulating protein lipoylation and mitochondrial respiratory activity particularly in Purkinje cells. Involved in iron homeostasis; affecting Fe-S cluster assembly and ceramide metabolism. Required for proper morphology and bioenergetic functions of mitochondria. Required for maintenance of neurons. This Bos taurus (Bovine) protein is Enoyl-[acyl-carrier-protein] reductase, mitochondrial (MECR).